The following is a 157-amino-acid chain: Stalk-specific protein B (157 aa).

An N-terminal signal peptide occupies residues methionine 1–alanine 19.

The protein localises to the secreted. In Dictyostelium discoideum (Social amoeba), this protein is Stalk-specific protein B (staB).